A 112-amino-acid polypeptide reads, in one-letter code: UPF0102 protein Spea_0251 (112 aa).

Belongs to the UPF0102 family.

This is UPF0102 protein Spea_0251 from Shewanella pealeana (strain ATCC 700345 / ANG-SQ1).